Reading from the N-terminus, the 521-residue chain is Bacillolysin (521 aa).

The N-terminal stretch at 1–27 (MGLGKKLSVAVAASFMSLTISLPGVQA) is a signal peptide. Residues 28-221 (AENPQLKENL…ILKKQNKVEH (194 aa)) constitute a propeptide, activation peptide. Ca(2+) is bound by residues Gln283 and Asp360. Zn(2+) is bound at residue His364. The active site involves Glu365. His368 and Glu388 together coordinate Zn(2+). Residues Asp399, Asp402, Asp404, Glu407, and Val411 each coordinate Ca(2+). His449 (proton donor) is an active-site residue.

Belongs to the peptidase M4 family. The cofactor is Ca(2+). Zn(2+) is required as a cofactor.

It is found in the secreted. The catalysed reaction is Similar, but not identical, to that of thermolysin.. Its function is as follows. Extracellular zinc metalloprotease. In Bacillus amyloliquefaciens (Bacillus velezensis), this protein is Bacillolysin (npr).